The sequence spans 243 residues: MPEDAAVAGGETGALVLFSGGQDSATCLAWALDRFPHVETLGFDYGQRHRVELDRRAALRQGLTALDPAWGRRLGPDHTLALAALGEISDTALTRDSAIAFARDGLPNTFVPGRNLAFLTFAAALAYRRGLRHIVGGMCETDYSGYPDCRDDTIKALQVALNLGMERRFVLHTPLMWIDKAQTWALAETLGGRALVDLVVEESHTCYLGERGARHEWGYGCGTCPACDLRAKGFSRYLAARAE.

18 to 28 lines the ATP pocket; the sequence is FSGGQDSATCL. Positions 206, 221, 224, and 227 each coordinate Zn(2+).

Belongs to the QueC family. Zn(2+) is required as a cofactor.

The catalysed reaction is 7-carboxy-7-deazaguanine + NH4(+) + ATP = 7-cyano-7-deazaguanine + ADP + phosphate + H2O + H(+). It functions in the pathway purine metabolism; 7-cyano-7-deazaguanine biosynthesis. Catalyzes the ATP-dependent conversion of 7-carboxy-7-deazaguanine (CDG) to 7-cyano-7-deazaguanine (preQ(0)). This is 7-cyano-7-deazaguanine synthase from Methylorubrum extorquens (strain PA1) (Methylobacterium extorquens).